Here is a 931-residue protein sequence, read N- to C-terminus: Dymeclin (931 aa).

3 disordered regions span residues 1–53 (MGVA…SSTT), 599–618 (SPSK…NTNN), and 839–931 (DANN…EKTN). A lipid anchor (N-myristoyl glycine) is attached at glycine 2. Composition is skewed to low complexity over residues 27-49 (NNNK…NNNN) and 601-618 (SKIN…NTNN). Residues 839–858 (DANNFTPKKQLSSDQLHSPP) are compositionally biased toward polar residues. 2 stretches are compositionally biased toward low complexity: residues 859–876 (TNTT…SSNT) and 889–901 (QLQQ…NQEQ). Residues 919 to 931 (TTGVELSSTEKTN) show a composition bias toward polar residues.

Belongs to the dymeclin family.

This chain is Dymeclin (dym), found in Dictyostelium discoideum (Social amoeba).